Here is a 589-residue protein sequence, read N- to C-terminus: MAIKRGADLIVEALEEYGTEQVVGFIGHTSHFVADAFSKSHLGKRVINPATELGGAWMVNGYNYVKDRSAAVGAWHCVGNLLLHAAMQEARTGRIPAVHIGLNSDGRLAGRSEAAQQVPWQSFTPIARSTQRVERLDKVGEAIHEAFRVAEGHPAGPAYVDIPFDLTADQIDDKALVPRGATRAKSVLHAPNEDVREAAAQLVAAKNPVILAGGGVARSGGSEALLKLAEMVGVPVVTTSTGAGVFPETHALAMGSAGFCGWKSANDMMAAADFVLVLGSRLSDWGIAQGYITKMPKFVHVDTDPAVLGTFYFPLLSVVADAKTFMEQLIEVLPGTSGFKAVRYQERENFRQATEFRAAWDGWVREQESGDGMPASMFRAMAEVRKVQRPEDIIVTDIGNHTLPMFGGAILQRPRRLVTSMAEGILGCGFPMALGAQLAEPNSRVFLGTGDGALYYHFNEFRVAVEHKLPVITMVFTNESYGANWTLMNHQFGQNNWTEFMNPDWVGIAKAFGAYGESVRETGDIAGALQRAIDSGKPALIEIPVSKTQGLASDPVGGVGPNLLLKGREIPVDTGGSMYPGENLLHLKS.

Residue E52 participates in thiamine diphosphate binding. Positions 400-480 (NHTLPMFGGA…VITMVFTNES (81 aa)) are thiamine pyrophosphate binding. Positions 451 and 478 each coordinate Mg(2+).

This sequence belongs to the TPP enzyme family. Homodimer. The cofactor is Mg(2+). Thiamine diphosphate serves as cofactor. Requires FAD as cofactor.

It carries out the reaction cyclohexan-1,2-dione + H2O = 6-oxohexanoate + H(+). Its function is as follows. Catalyzes the ring-opening cleavage of the alicyclic alcohol cyclohexane-1,2-dione. This is Cyclohexane-1,2-dione hydrolase from Azoarcus sp.